Reading from the N-terminus, the 1247-residue chain is Leucine-rich repeat-containing protein 53 (1247 aa).

LRR repeat units follow at residues 34-55 (TTRV…NLSL), 58-79 (NLAL…ALHG), 82-102 (MLRT…TDHT), 108-129 (SLQV…WFRN), 132-153 (GLTR…SFGG), 158-179 (SLRY…AFRP), and 182-203 (QLQE…FTPL). In terms of domain architecture, LRRCT spans 214 to 271 (NQWSCTCDLHPLARFLRNYIKSSAHTLRNAKDLNCQPSTAAVAAAQSVLRLSETNCDS). A helical membrane pass occupies residues 294–314 (LLTVLGFAGAVGLTCLGLVVF). Disordered regions lie at residues 828 to 866 (SAGH…EDAT), 887 to 927 (VLPF…SPRN), and 1223 to 1247 (ENSA…LETE). 2 stretches are compositionally biased toward polar residues: residues 898 to 927 (DQGT…SPRN) and 1238 to 1247 (YATTSPLETE).

The protein resides in the membrane. This Homo sapiens (Human) protein is Leucine-rich repeat-containing protein 53 (LRRC53).